The following is a 523-amino-acid chain: Frizzled-4 (523 aa).

An N-terminal signal peptide occupies residues 1 to 22 (MGARSLTLLYLLCCLVVGLIAG). Topologically, residues 23–198 (FGEEEERSCD…KCGYDSGLYN (176 aa)) are extracellular. The region spanning 26–147 (EEERSCDPIR…NDHNHMCMEG (122 aa)) is the FZ domain. 8 disulfide bridges follow: Cys-31-Cys-92, Cys-39-Cys-85, Cys-76-Cys-114, Cys-103-Cys-144, Cys-107-Cys-131, Cys-167-Cys-186, Cys-190-Cys-268, and Cys-288-Cys-363. Residue Asn-45 is glycosylated (N-linked (GlcNAc...) asparagine). N-linked (GlcNAc...) asparagine glycosylation is present at Asn-130. A helical transmembrane segment spans residues 199–229 (RLSKEFTDIWMAVWASLCFISTAFTVLTFLI). Topologically, residues 230-235 (DSSRFC) are cytoplasmic. The helical transmembrane segment at 236–261 (YPERPIIFLSMCYNIYSIAYIVRLTV) threads the bilayer. Residues 262–285 (GRERISCDFEEAAEPVLIQEGLKN) are Extracellular-facing. Residues 286–319 (TGCAIIFLLMYFFGMASSIWWVILTLTWFLAAGL) form a helical membrane-spanning segment. The Cytoplasmic portion of the chain corresponds to 320–322 (KWG). A helical transmembrane segment spans residues 323-351 (HEAIEMHSSYFHIAAWAIPAVKTIVILIM). Residues 352 to 369 (RLVDADELTGLCYVGNQN) are Extracellular-facing. The chain crosses the membrane as a helical span at residues 370-396 (IDALTGFVVAPLFTYLVIGTLFIAAGL). Over 397 to 417 (VALFKIRSNLQKDGTKTDKLE) the chain is Cytoplasmic. The helical transmembrane segment at 418–443 (RLMVKIGVFSVLYTVPATCVIACYFY) threads the bilayer. The Extracellular segment spans residues 444–459 (EVSNWNVFRYTADDSN). The chain crosses the membrane as a helical span at residues 460–481 (MAVEMLNIFMSLLVGITSGMWI). Over 482–523 (WSAKTLHTWQKCTNRLVNSGKVKRKKRVDGWVKPGKGNETVV) the chain is Cytoplasmic. The short motif at 485-490 (KTLHTW) is the Lys-Thr-X-X-X-Trp motif, mediates interaction with the PDZ domain of Dvl family members element. The short motif at 521–523 (TVV) is the PDZ-binding element.

It belongs to the G-protein coupled receptor Fz/Smo family. In terms of assembly, interacts (via FZ domain) with tsku; tsku competes with wnt2b for binding to fzd4, inhibiting Wnt signaling and repressing peripheral eye development.

It is found in the cell membrane. Functionally, receptor for Wnt proteins. Most frizzled receptors are coupled to the beta-catenin canonical signaling pathway, which leads to the activation of disheveled proteins, inhibition of GSK-3 kinase, nuclear accumulation of beta-catenin and activation of Wnt target genes. A second signaling pathway involving PKC and calcium fluxes has been seen for some family members, but it is not yet clear if it represents a distinct pathway or if it can be integrated in the canonical pathway, as PKC seems to be required for Wnt-mediated inactivation of GSK-3 kinase. Both pathways seem to involve interactions with G-proteins. May be involved in transduction and intercellular transmission of polarity information during tissue morphogenesis and/or in differentiated tissues. Activated by Wnt5A. The sequence is that of Frizzled-4 (fzd4) from Xenopus laevis (African clawed frog).